We begin with the raw amino-acid sequence, 565 residues long: Sulfite reductase [NADPH] hemoprotein beta-component (565 aa).

4 residues coordinate [4Fe-4S] cluster: Cys429, Cys435, Cys474, and Cys478. Position 478 (Cys478) interacts with siroheme.

Belongs to the nitrite and sulfite reductase 4Fe-4S domain family. In terms of assembly, alpha(8)-beta(8). The alpha component is a flavoprotein, the beta component is a hemoprotein. It depends on siroheme as a cofactor. The cofactor is [4Fe-4S] cluster.

It catalyses the reaction hydrogen sulfide + 3 NADP(+) + 3 H2O = sulfite + 3 NADPH + 4 H(+). It participates in sulfur metabolism; hydrogen sulfide biosynthesis; hydrogen sulfide from sulfite (NADPH route): step 1/1. Component of the sulfite reductase complex that catalyzes the 6-electron reduction of sulfite to sulfide. This is one of several activities required for the biosynthesis of L-cysteine from sulfate. The polypeptide is Sulfite reductase [NADPH] hemoprotein beta-component (Shewanella putrefaciens (strain CN-32 / ATCC BAA-453)).